Here is a 217-residue protein sequence, read N- to C-terminus: Octanoyltransferase (217 aa).

The BPL/LPL catalytic domain occupies 33–208; that stretch reads SSSQDEIWLV…KLCSLLGIAS (176 aa). Residues 72 to 79, 139 to 141, and 152 to 154 contribute to the substrate site; these read RGGQVTYH, SIG, and GLA. Cys-170 serves as the catalytic Acyl-thioester intermediate.

Belongs to the LipB family.

Its subcellular location is the cytoplasm. It catalyses the reaction octanoyl-[ACP] + L-lysyl-[protein] = N(6)-octanoyl-L-lysyl-[protein] + holo-[ACP] + H(+). Its pathway is protein modification; protein lipoylation via endogenous pathway; protein N(6)-(lipoyl)lysine from octanoyl-[acyl-carrier-protein]: step 1/2. Catalyzes the transfer of endogenously produced octanoic acid from octanoyl-acyl-carrier-protein onto the lipoyl domains of lipoate-dependent enzymes. Lipoyl-ACP can also act as a substrate although octanoyl-ACP is likely to be the physiological substrate. This is Octanoyltransferase from Pseudoalteromonas atlantica (strain T6c / ATCC BAA-1087).